Reading from the N-terminus, the 322-residue chain is Heterogeneous nuclear ribonucleoprotein D-like (322 aa).

The tract at residues 1–36 (MTGTARSALPLPQSPARALRPSGAARAAPSLSPSRF) is disordered. At Arg6 the chain carries Omega-N-methylarginine. The span at 14 to 36 (SPARALRPSGAARAAPSLSPSRF) shows a compositional bias: low complexity. RRM domains are found at residues 51-133 (NKMF…KGKE) and 136-215 (KKVF…QPKE). The residue at position 64 (Lys64) is an N6-methyllysine. Lys112 is covalently cross-linked (Glycyl lysine isopeptide (Lys-Gly) (interchain with G-Cter in SUMO2)). Lys119 bears the N6-acetyllysine mark. The residue at position 144 (Ser144) is a Phosphoserine. Disordered regions lie at residues 216–251 (VYRQQQQQQKGGRGAAAGGRGGARGRGRGQGQNWNQ) and 299–322 (SGQQSTYGKASRGGGNHQNNYQPY). Positions 226-245 (GGRGAAAGGRGGARGRGRGQ) are enriched in gly residues. The tract at residues 245-322 (QGQNWNQGFN…GNHQNNYQPY (78 aa)) is necessary for interaction with TNPO1. Dimethylated arginine; alternate is present on Arg310. Residue Arg310 is modified to Omega-N-methylarginine; alternate.

Interacts with TNPO1 and ZNF148. Dimethylation of Arg-310 is probably of the asymmetric type.

The protein localises to the nucleus. It is found in the cytoplasm. Functionally, acts as a transcriptional regulator. Promotes transcription repression. Promotes transcription activation in differentiated myotubes. Binds to double- and single-stranded DNA sequences. Binds to the transcription suppressor CATR sequence of the COX5B promoter. Binds with high affinity to RNA molecules that contain AU-rich elements (AREs) found within the 3'-UTR of many proto-oncogenes and cytokine mRNAs. Binds both to nuclear and cytoplasmic poly(A) mRNAs. Binds to poly(G) and poly(A), but not to poly(U) or poly(C) RNA homopolymers. Binds to the 5'-ACUAGC-3' RNA consensus sequence. This Rattus norvegicus (Rat) protein is Heterogeneous nuclear ribonucleoprotein D-like (Hnrnpdl).